Consider the following 203-residue polypeptide: GTP-binding protein YPTC1 (203 aa).

GTP is bound by residues 15–23 (GDSGVGKSC), 33–40 (YTESYIST), 63–67 (DTAGQ), 121–124 (NKSD), and 151–153 (SAK). The short motif at 37–45 (YISTIGVDF) is the Effector region element. The segment at 174–203 (ASQPIPTKAGGPVVRPQEGKPINSKSSSCC) is disordered. S-geranylgeranyl cysteine attachment occurs at residues Cys-202 and Cys-203.

The protein belongs to the small GTPase superfamily. Rab family.

It is found in the cell membrane. Its function is as follows. Protein transport. Probably involved in vesicular traffic. The protein is GTP-binding protein YPTC1 (YPTC1) of Chlamydomonas reinhardtii (Chlamydomonas smithii).